We begin with the raw amino-acid sequence, 251 residues long: Triosephosphate isomerase (251 aa).

Asn9–Lys11 contributes to the substrate binding site. Residue His96 is the Electrophile of the active site. The active-site Proton acceptor is the Glu168. Substrate contacts are provided by residues Gly174, Ser214, and Gly235–Gly236.

It belongs to the triosephosphate isomerase family. As to quaternary structure, homodimer.

It localises to the cytoplasm. It carries out the reaction D-glyceraldehyde 3-phosphate = dihydroxyacetone phosphate. The protein operates within carbohydrate biosynthesis; gluconeogenesis. Its pathway is carbohydrate degradation; glycolysis; D-glyceraldehyde 3-phosphate from glycerone phosphate: step 1/1. Its function is as follows. Involved in the gluconeogenesis. Catalyzes stereospecifically the conversion of dihydroxyacetone phosphate (DHAP) to D-glyceraldehyde-3-phosphate (G3P). The polypeptide is Triosephosphate isomerase (Porphyromonas gingivalis (strain ATCC BAA-308 / W83)).